A 389-amino-acid chain; its full sequence is Chalcone synthase H2 (389 aa).

The active site involves Cys164.

It belongs to the thiolase-like superfamily. Chalcone/stilbene synthases family.

It is found in the cytoplasm. It carries out the reaction (E)-4-coumaroyl-CoA + 3 malonyl-CoA + 3 H(+) = 2',4,4',6'-tetrahydroxychalcone + 3 CO2 + 4 CoA. The protein operates within secondary metabolite biosynthesis; flavonoid biosynthesis. Involved in the biosynthesis of prenylated phenolics natural products which contribute to the bitter taste of beer and display broad biological activities. Chalcone synthase that can use 4-coumaroyl-CoA to produce 4,2',4',6'-tetrahydroxychalcone (also termed naringenin-chalcone or chalcone) which can, under specific conditions, spontaneously isomerize into naringenin. The sequence is that of Chalcone synthase H2 from Humulus lupulus (European hop).